The chain runs to 144 residues: MDLASLNAFIAVAETGSFSEAGERLHLTQPAVSKRIAALEQQLQVRLFDRLGREVRLTEAGRALLPRAYRILSVLEDTRRALNNLNGDVSGRLTLATSHHIGLHRLPPCCAPSPAPIRRWRWTSASSIRKWPTRRSCTAAPSWR.

The 58-residue stretch at 1-58 (MDLASLNAFIAVAETGSFSEAGERLHLTQPAVSKRIAALEQQLQVRLFDRLGREVRLT) folds into the HTH lysR-type domain. The segment at residues 18–38 (FSEAGERLHLTQPAVSKRIAA) is a DNA-binding region (H-T-H motif).

It belongs to the LysR transcriptional regulatory family.

This is an uncharacterized protein from Azotobacter vinelandii.